The following is a 379-amino-acid chain: Putative zinc metalloprotease BR1156/BS1330_I1152 (379 aa).

H33 lines the Zn(2+) pocket. E34 is an active-site residue. H37 serves as a coordination point for Zn(2+). 4 helical membrane-spanning segments follow: residues 39-61 (LVAR…ELLG), 122-144 (VFAG…FALY), 305-327 (FDWL…LFPL), and 355-377 (IFYR…NDLF). In terms of domain architecture, PDZ spans 133–208 (TIAIFSVFFA…LNFTVERDGK (76 aa)).

It belongs to the peptidase M50B family. Requires Zn(2+) as cofactor.

It is found in the cell inner membrane. The sequence is that of Putative zinc metalloprotease BR1156/BS1330_I1152 from Brucella suis biovar 1 (strain 1330).